The primary structure comprises 147 residues: Hemoglobin subunit beta (147 aa).

Positions 3-147 constitute a Globin domain; that stretch reads EWTDSERAII…VVSALGREYH (145 aa). Residues histidine 64 and histidine 93 each contribute to the heme b site.

It belongs to the globin family. Heterotetramer of two alpha chains and two beta chains. Red blood cells.

Its function is as follows. Involved in oxygen transport from gills to the various peripheral tissues. The polypeptide is Hemoglobin subunit beta (hbb) (Gadus morhua (Atlantic cod)).